The following is a 276-amino-acid chain: Proteasome subunit beta type-8 (276 aa).

Positions 1–72 (MALLEVCGAP…KNIRKEMVHG (72 aa)) are cleaved as a propeptide — removed in mature form. The Nucleophile role is filled by threonine 73.

It belongs to the peptidase T1B family. The 26S proteasome consists of a 20S proteasome core and two 19S regulatory subunits. The 20S proteasome core is composed of 28 subunits that are arranged in four stacked rings, resulting in a barrel-shaped structure. The two end rings are each formed by seven alpha subunits, and the two central rings are each formed by seven beta subunits. The catalytic chamber with the active sites is on the inside of the barrel. Component of the immunoproteasome, where it displaces the equivalent housekeeping subunit PSMB5. Component of the spermatoproteasome, a form of the proteasome specifically found in testis. Directly interacts with POMP. Autocleaved. The resulting N-terminal Thr residue of the mature subunit is responsible for the nucleophile proteolytic activity.

It localises to the cytoplasm. The protein resides in the nucleus. The enzyme catalyses Cleavage of peptide bonds with very broad specificity.. In terms of biological role, the proteasome is a multicatalytic proteinase complex which is characterized by its ability to cleave peptides with Arg, Phe, Tyr, Leu, and Glu adjacent to the leaving group at neutral or slightly basic pH. The proteasome has an ATP-dependent proteolytic activity. This subunit is involved in antigen processing to generate class I binding peptides. May participate in the generation of spliced peptides resulting from the ligation of two separate proteasomal cleavage products that are not contiguous in the parental protein. Required for adipocyte differentiation. This Canis lupus familiaris (Dog) protein is Proteasome subunit beta type-8 (PSMB8).